A 539-amino-acid polypeptide reads, in one-letter code: Tetracenomycin B2 monooxygenase-dioxygenase (539 aa).

FAD-binding residues include L15, E35, Q128, and L152. Residue Y231 is the Proton acceptor of the active site. Position 313 (D313) interacts with FAD.

Belongs to the PheA/TfdB FAD monooxygenase family. FAD is required as a cofactor.

It carries out the reaction tetracenomycin B2 + 2 NADPH + 2 O2 + 2 H(+) = 8-demethyltetracenomycin C + 2 NADP(+) + H2O. The catalysed reaction is tetracenomycin A2 + 2 NADPH + 2 O2 + 2 H(+) = tetracenomycin C + 2 NADP(+) + H2O. Its pathway is antibiotic biosynthesis. Functionally, involved in the biosynthesis of elloramycin, an antitumor polyketide. In vivo, probably catalyzes the triple hydroxylation of 8-demethyltetracenomycin A2 (tetracenomycin B2) at positions C-4, C-4a and C-12a to give 8-demethyltetracenomycin C (8-DMTC). In vitro, catalyzes the triple hydroxylation of tetracenomycin A2 (TCM A2) to give tetracenomycin C (TCM C). Uses NADPH as an electron donor and requires molecular O(2). In Streptomyces olivaceus, this protein is Tetracenomycin B2 monooxygenase-dioxygenase.